Here is a 408-residue protein sequence, read N- to C-terminus: NADH-quinone oxidoreductase subunit H (408 aa).

9 helical membrane passes run Leu18–Ile38, Pro84–Ile104, Leu124–Leu144, Val165–Thr185, Thr198–Glu218, Ser261–Ile281, Trp288–Leu308, Met321–Ile341, and Trp353–Ala373. Residues Val381–Ala408 form a disordered region. Over residues Gln382–Pro398 the composition is skewed to pro residues.

The protein belongs to the complex I subunit 1 family. In terms of assembly, NDH-1 is composed of 14 different subunits. Subunits NuoA, H, J, K, L, M, N constitute the membrane sector of the complex.

It is found in the cell membrane. The enzyme catalyses a quinone + NADH + 5 H(+)(in) = a quinol + NAD(+) + 4 H(+)(out). Functionally, NDH-1 shuttles electrons from NADH, via FMN and iron-sulfur (Fe-S) centers, to quinones in the respiratory chain. The immediate electron acceptor for the enzyme in this species is believed to be menaquinone. Couples the redox reaction to proton translocation (for every two electrons transferred, four hydrogen ions are translocated across the cytoplasmic membrane), and thus conserves the redox energy in a proton gradient. This subunit may bind ubiquinone. This chain is NADH-quinone oxidoreductase subunit H, found in Mycolicibacterium smegmatis (strain ATCC 700084 / mc(2)155) (Mycobacterium smegmatis).